Reading from the N-terminus, the 218-residue chain is Pyridoxine/pyridoxamine 5'-phosphate oxidase (218 aa).

Residues 14–17 (RREY) and lysine 72 each bind substrate. FMN contacts are provided by residues 67–72 (RIVLLK), 82–83 (YT), arginine 88, lysine 89, and glutamine 111. Substrate contacts are provided by tyrosine 129, arginine 133, and serine 137. FMN-binding positions include 146 to 147 (QS) and tryptophan 191. Substrate is bound at residue 197–199 (RLH). Arginine 201 contributes to the FMN binding site.

It belongs to the pyridoxamine 5'-phosphate oxidase family. As to quaternary structure, homodimer. Requires FMN as cofactor.

It carries out the reaction pyridoxamine 5'-phosphate + O2 + H2O = pyridoxal 5'-phosphate + H2O2 + NH4(+). The catalysed reaction is pyridoxine 5'-phosphate + O2 = pyridoxal 5'-phosphate + H2O2. It participates in cofactor metabolism; pyridoxal 5'-phosphate salvage; pyridoxal 5'-phosphate from pyridoxamine 5'-phosphate: step 1/1. Its pathway is cofactor metabolism; pyridoxal 5'-phosphate salvage; pyridoxal 5'-phosphate from pyridoxine 5'-phosphate: step 1/1. Functionally, catalyzes the oxidation of either pyridoxine 5'-phosphate (PNP) or pyridoxamine 5'-phosphate (PMP) into pyridoxal 5'-phosphate (PLP). This is Pyridoxine/pyridoxamine 5'-phosphate oxidase from Citrobacter koseri (strain ATCC BAA-895 / CDC 4225-83 / SGSC4696).